Consider the following 184-residue polypeptide: Antigen Sm21.7 (184 aa).

The 36-residue stretch at 37–72 (LDMKQVNEWIALFDVDKDQKITFEEFCRGLGLKQNE) folds into the EF-hand domain. Ca(2+) is bound by residues Asp50, Asp52, Asp54, Lys56, and Glu61.

This is Antigen Sm21.7 (SM21.7) from Schistosoma mansoni (Blood fluke).